We begin with the raw amino-acid sequence, 296 residues long: Meiotically up-regulated gene 2 protein (296 aa).

Belongs to the UPF0612 family.

The protein localises to the cytoplasm. The protein resides in the nucleus. Its function is as follows. Has a role in meiosis. In Schizosaccharomyces pombe (strain 972 / ATCC 24843) (Fission yeast), this protein is Meiotically up-regulated gene 2 protein (mug2).